An 806-amino-acid chain; its full sequence is MAYDHKTIEKKWQKFWKKNETFKADLNKDQKKYYALDMFPYPSGQGLHVGHPEGYTATDVMSRMKRMQGFNVLHPMGWDAFGLPAEQYALKTGHNPKDFTNKNIDHFRDQIQSLGFSYDWDREVNTTDPKFYKWTQWIFEQLYKKGLAYESEIMVNWAPDFMGGTVVANEEVEDGKTKRGGYPVYRKPMRQWVLKITAYADRLIDDLDLVDWPESVKEMQRNWIGRSEGASVFFPVVGDEDTKIEVFTTRADTLFGASYVVLAPEQELVDQLTTPEHKAEVEKYKEEASRRSDLERTDLNKDKTGVFTGSYVINPVNGEKLPIWISDYVLASYGTGAVMAVPSGDQRDYDFATKFNLPIKPIIEGADISEGAFDGDGKHINSGFLDGLNIADAKQKMIDWLEEHDAGHKKVNYRLRDWIFSRQRYWGEPIPVIHWDDGTTSLVPEDELPLELPKTDNIEPSGTGESPLANVEDWVNVYDENGRHGLRETNTMPQWAGSSWYWLRYTDPHNDEEFASKEALDYWSPVDLYVGGAEHAVLHLLYARFWHKVLYDLGLVPTKEPFMKLVNQGMILGSNHEKMSKSKGNVVNPDDIVDQYGADTLRLYEMFMGPLEESVPWDEKGLHGANKWVQRVWRLLMDDNNHLRDRVSTFNDGKLTKVYNQTVKKVTEDYERMHFNTAISQLMVFVNEAYKVDDLPVEYMKGFVKMIAPIMPHMAEELWSQFGESDTITYQPWPTYDPKALVEDEVEMIVQVNGKVRAKIKMAKDTDRDEAQQLALANEHVKKFTDGKDIKKVIVVPNKIVNIVAK.

The 'HIGH' region motif lies at 40-51; it reads PYPSGQGLHVGH. Residues 578-582 carry the 'KMSKS' region motif; the sequence is KMSKS. ATP is bound at residue K581.

The protein belongs to the class-I aminoacyl-tRNA synthetase family.

It localises to the cytoplasm. It catalyses the reaction tRNA(Leu) + L-leucine + ATP = L-leucyl-tRNA(Leu) + AMP + diphosphate. This Limosilactobacillus reuteri (strain DSM 20016) (Lactobacillus reuteri) protein is Leucine--tRNA ligase.